Here is a 492-residue protein sequence, read N- to C-terminus: Ketol-acid reductoisomerase (NADP(+)) (492 aa).

One can recognise a KARI N-terminal Rossmann domain in the interval alanine 15–serine 208. Residues cysteine 45–glutamine 48, arginine 68, arginine 76, serine 78, and aspartate 108–glutamine 110 each bind NADP(+). Histidine 132 is a catalytic residue. Glycine 158 serves as a coordination point for NADP(+). KARI C-terminal knotted domains are found at residues serine 209–glutamine 344 and phenylalanine 345–methionine 485. 4 residues coordinate Mg(2+): aspartate 217, glutamate 221, glutamate 389, and glutamate 393. Serine 414 contacts substrate.

It belongs to the ketol-acid reductoisomerase family. Mg(2+) serves as cofactor.

It catalyses the reaction (2R)-2,3-dihydroxy-3-methylbutanoate + NADP(+) = (2S)-2-acetolactate + NADPH + H(+). It carries out the reaction (2R,3R)-2,3-dihydroxy-3-methylpentanoate + NADP(+) = (S)-2-ethyl-2-hydroxy-3-oxobutanoate + NADPH + H(+). The protein operates within amino-acid biosynthesis; L-isoleucine biosynthesis; L-isoleucine from 2-oxobutanoate: step 2/4. Its pathway is amino-acid biosynthesis; L-valine biosynthesis; L-valine from pyruvate: step 2/4. Functionally, involved in the biosynthesis of branched-chain amino acids (BCAA). Catalyzes an alkyl-migration followed by a ketol-acid reduction of (S)-2-acetolactate (S2AL) to yield (R)-2,3-dihydroxy-isovalerate. In the isomerase reaction, S2AL is rearranged via a Mg-dependent methyl migration to produce 3-hydroxy-3-methyl-2-ketobutyrate (HMKB). In the reductase reaction, this 2-ketoacid undergoes a metal-dependent reduction by NADPH to yield (R)-2,3-dihydroxy-isovalerate. This chain is Ketol-acid reductoisomerase (NADP(+)), found in Yersinia enterocolitica serotype O:8 / biotype 1B (strain NCTC 13174 / 8081).